The following is a 302-amino-acid chain: Aspartate carbamoyltransferase catalytic subunit (302 aa).

Carbamoyl phosphate contacts are provided by R53 and T54. Position 82 (K82) interacts with L-aspartate. Carbamoyl phosphate contacts are provided by R103, H131, and Q134. Positions 164 and 223 each coordinate L-aspartate. Carbamoyl phosphate contacts are provided by L260 and P261.

It belongs to the aspartate/ornithine carbamoyltransferase superfamily. ATCase family. In terms of assembly, heterooligomer of catalytic and regulatory chains.

It catalyses the reaction carbamoyl phosphate + L-aspartate = N-carbamoyl-L-aspartate + phosphate + H(+). It participates in pyrimidine metabolism; UMP biosynthesis via de novo pathway; (S)-dihydroorotate from bicarbonate: step 2/3. Its function is as follows. Catalyzes the condensation of carbamoyl phosphate and aspartate to form carbamoyl aspartate and inorganic phosphate, the committed step in the de novo pyrimidine nucleotide biosynthesis pathway. In Methanococcus maripaludis (strain C7 / ATCC BAA-1331), this protein is Aspartate carbamoyltransferase catalytic subunit.